The sequence spans 190 residues: Putative manganese efflux pump MntP (190 aa).

Transmembrane regions (helical) follow at residues 6–26 (IWLLAISLAMDCFTVSITSGI), 36–56 (FFIMAFFFGLFQAVMPLIGWF), 61–81 (FSHLIEDYDHWIAFGLLAFWG), 108–128 (LAIATSIDALAIGISFAFVGI), 138–158 (IVIIGFTSFVISTLGSLIGVF), and 169–189 (LWGGLVLIIIGVKILIEHLFL).

Belongs to the MntP (TC 9.B.29) family.

The protein resides in the cell inner membrane. In terms of biological role, probably functions as a manganese efflux pump. This Phocaeicola vulgatus (strain ATCC 8482 / DSM 1447 / JCM 5826 / CCUG 4940 / NBRC 14291 / NCTC 11154) (Bacteroides vulgatus) protein is Putative manganese efflux pump MntP.